The following is an 804-amino-acid chain: Probable copper-exporting P-type ATPase (804 aa).

The Cytoplasmic segment spans residues 1 to 101 (MVKDTYISSA…VEHLSRMKRK (101 aa)). Positions 16–82 (MERTVRVTGM…VIEDLGYGVV (67 aa)) constitute an HMA 1 domain. Cu(+) is bound by residues C27 and C30. The helical transmembrane segment at 102–122 (LYVAAFAGVLLLFLAHFISLP) threads the bilayer. Over 123-128 (YEDFVQ) the chain is Extracellular. Residues 129–149 (LLIALPAIFYSGSSIFKAAFS) form a helical membrane-spanning segment. Residues 150–159 (ALRRRTLNMD) lie on the Cytoplasmic side of the membrane. The helical transmembrane segment at 160–180 (VMYSMGVGAAFLASVLSTAGV) threads the bilayer. The Extracellular segment spans residues 181–186 (LPREYS). Residues 187–204 (FYETSVLLLAFLLLGRTL) form a helical membrane-spanning segment. The Cytoplasmic segment spans residues 205 to 339 (EARAKSRTGE…PIQRLADKVV (135 aa)). Residues 340–360 (AYFIPTVLLVAISAFIYWYFI) traverse the membrane as a helical segment. The Extracellular portion of the chain corresponds to 361–364 (AHAP). A helical membrane pass occupies residues 365-385 (LLFAFTTLIAVLVVACPCAFG). Over 386-680 (LATPTALTVG…KIKQNIFWAL (295 aa)) the chain is Cytoplasmic. D424 serves as the catalytic 4-aspartylphosphate intermediate. Residues 457 to 462 (ERRSEH) and 490 to 501 (GEGVVADGILVG) contribute to the ATP site. Residues D618 and D622 each contribute to the Mg(2+) site. The helical transmembrane segment at 681 to 701 (IYNVILIPAAAGLLYPIFGVV) threads the bilayer. Residues 702–704 (FRP) are Extracellular-facing. A helical transmembrane segment spans residues 705–725 (EFAGLAMAMSSVSVVANSLLL). The Cytoplasmic segment spans residues 726–804 (RNYVPPIRRG…AAGYQAKLRS (79 aa)). The region spanning 740 to 801 (EKIVLELSGL…AVEAAGYQAK (62 aa)) is the HMA 2 domain. Cu(+)-binding residues include C751 and C754.

Belongs to the cation transport ATPase (P-type) (TC 3.A.3) family. Type IB subfamily. In terms of assembly, interacts with CopZ probably in the CopZ Cu(+)-bound form.

The protein resides in the cell membrane. It catalyses the reaction Cu(+)(in) + ATP + H2O = Cu(+)(out) + ADP + phosphate + H(+). With respect to regulation, activated by Cu(+) and Ag(+) and inhibited by vanadate. Activated by CopZ in its Cu(+)-bound form. Functionally, probably involved in copper and silver export. This chain is Probable copper-exporting P-type ATPase (copA), found in Archaeoglobus fulgidus (strain ATCC 49558 / DSM 4304 / JCM 9628 / NBRC 100126 / VC-16).